We begin with the raw amino-acid sequence, 361 residues long: Thymidine kinase (361 aa).

17–24 contacts ATP; the sequence is GPHGVGKS. Residue glutamate 46 is the Proton acceptor of the active site. 2 residues coordinate substrate: tyrosine 64 and glutamine 88. Arginine 184 provides a ligand contact to ATP. Arginine 190 contributes to the substrate binding site.

The protein belongs to the herpesviridae thymidine kinase family. In terms of assembly, homodimer.

The enzyme catalyses thymidine + ATP = dTMP + ADP + H(+). Its function is as follows. Catalyzes the transfer of the gamma-phospho group of ATP to thymidine to generate dTMP in the salvage pathway of pyrimidine synthesis. The dTMP serves as a substrate for DNA polymerase during viral DNA replication. Allows the virus to be reactivated and to grow in non-proliferative cells lacking a high concentration of phosphorylated nucleic acid precursors. This Saimiriine herpesvirus 1 (strain MV-5-4-PSL) (SaHV-1) protein is Thymidine kinase.